Here is a 174-residue protein sequence, read N- to C-terminus: Nascent polypeptide-associated complex subunit alpha (174 aa).

Ser-2 carries the post-translational modification N-acetylserine. The NAC-A/B domain maps to Asn-14–Leu-78. Residues Ala-85–Lys-137 form a disordered region. Ser-93 carries the phosphoserine modification. The segment covering Ala-111–Ala-120 has biased composition (low complexity). Acidic residues predominate over residues Ala-121–Ala-132. The region spanning Leu-135–Lys-174 is the UBA domain.

The protein belongs to the NAC-alpha family. Part of the nascent polypeptide-associated complex (NAC), consisting of EGD2 and either EGD1 or BTT1. NAC associates with ribosomes via EGD1 or BTT1, and with the CCR4-NOT complex.

It localises to the cytoplasm. The protein resides in the nucleus. Component of the nascent polypeptide-associated complex (NAC), a dynamic component of the ribosomal exit tunnel, protecting the emerging polypeptides from interaction with other cytoplasmic proteins to ensure appropriate nascent protein targeting. The NAC complex also promotes mitochondrial protein import by enhancing productive ribosome interactions with the outer mitochondrial membrane and blocks the inappropriate interaction of ribosomes translating non-secretory nascent polypeptides with translocation sites in the membrane of the endoplasmic reticulum. EGD2 may also be involved in transcription regulation. The chain is Nascent polypeptide-associated complex subunit alpha (EGD2) from Saccharomyces cerevisiae (strain YJM789) (Baker's yeast).